We begin with the raw amino-acid sequence, 657 residues long: Methyl-accepting chemotaxis protein CtpL (657 aa).

Over 1 to 5 the chain is Cytoplasmic; the sequence is MRLKQ. Residues 6-26 form a helical membrane-spanning segment; sequence LTNLNTLLLLTVCLALGITLW. Residues 27-305 lie on the Periplasmic side of the membrane; the sequence is WSQRAMERPF…ERQRLQGQVR (279 aa). The chain crosses the membrane as a helical span at residues 306–326; the sequence is LIQGGMIALILLIALAIDSLQ. In terms of domain architecture, HAMP spans 327–380; it reads RRLARVLGQLVPALSAWADGDFSRPISLRTRTEDLRNLEDSLNRLRSFLAELVG. Topologically, residues 327–657 are cytoplasmic; it reads RRLARVLGQL…LRTTVQAFRL (331 aa). Residues 385–621 enclose the Methyl-accepting transducer domain; that stretch reads RAEQVAGSSQ…EIRSHSERIH (237 aa).

The protein belongs to the methyl-accepting chemotaxis (MCP) protein family.

The protein localises to the cell inner membrane. Functionally, chemotactic-signal transducers respond to changes in the concentration of attractants and repellents in the environment, transduce a signal from the outside to the inside of the cell, and facilitate sensory adaptation through the variation of the level of methylation. Chemoreceptor for inorganic phosphate, which is required for taxis at low concentrations of phosphate. Is also responsible for the positive chemotaxis toward 4-chloroaniline (4CA) and catechol. Does not recognize inorganic phosphate directly, but via a complex between the periplasmic protein PstS and inorganic phosphate. The protein is Methyl-accepting chemotaxis protein CtpL of Pseudomonas aeruginosa (strain ATCC 15692 / DSM 22644 / CIP 104116 / JCM 14847 / LMG 12228 / 1C / PRS 101 / PAO1).